The chain runs to 554 residues: Arginine--tRNA ligase (554 aa).

The 'HIGH' region motif lies at 132-142 (ANPTGPIHLGG).

It belongs to the class-I aminoacyl-tRNA synthetase family. In terms of assembly, monomer.

Its subcellular location is the cytoplasm. The enzyme catalyses tRNA(Arg) + L-arginine + ATP = L-arginyl-tRNA(Arg) + AMP + diphosphate. The sequence is that of Arginine--tRNA ligase from Kineococcus radiotolerans (strain ATCC BAA-149 / DSM 14245 / SRS30216).